Here is a 410-residue protein sequence, read N- to C-terminus: Inositol hexakisphosphate kinase 3 (410 aa).

Position 211–219 (211–219 (PCVLDLKMG)) interacts with substrate. The interval 333–358 (QEPPERAPGSPHPHEAPQAAHGSSPG) is disordered.

Belongs to the inositol phosphokinase (IPK) family. As to expression, detected in brain.

The protein resides in the cytoplasm. It carries out the reaction 1D-myo-inositol hexakisphosphate + ATP = 5-diphospho-1D-myo-inositol 1,2,3,4,6-pentakisphosphate + ADP. It catalyses the reaction 1-diphospho-1D-myo-inositol 2,3,4,5,6-pentakisphosphate + ATP + H(+) = 1,5-bis(diphospho)-1D-myo-inositol 2,3,4,6-tetrakisphosphate + ADP. Converts inositol hexakisphosphate (InsP6) to diphosphoinositol pentakisphosphate (InsP7/PP-InsP5). Converts 1,3,4,5,6-pentakisphosphate (InsP5) to PP-InsP4. This chain is Inositol hexakisphosphate kinase 3 (IP6K3), found in Homo sapiens (Human).